We begin with the raw amino-acid sequence, 273 residues long: Dermonecrotic toxin LspaSicTox-alphaIA2iv (273 aa).

The active site involves His5. Mg(2+) contacts are provided by Glu25 and Asp27. The Nucleophile role is filled by His41. 2 disulfide bridges follow: Cys45-Cys51 and Cys47-Cys190. Asp85 serves as a coordination point for Mg(2+).

This sequence belongs to the arthropod phospholipase D family. Class II subfamily. Mg(2+) serves as cofactor. As to expression, expressed by the venom gland.

It is found in the secreted. It carries out the reaction an N-(acyl)-sphingosylphosphocholine = an N-(acyl)-sphingosyl-1,3-cyclic phosphate + choline. The enzyme catalyses an N-(acyl)-sphingosylphosphoethanolamine = an N-(acyl)-sphingosyl-1,3-cyclic phosphate + ethanolamine. It catalyses the reaction a 1-acyl-sn-glycero-3-phosphocholine = a 1-acyl-sn-glycero-2,3-cyclic phosphate + choline. The catalysed reaction is a 1-acyl-sn-glycero-3-phosphoethanolamine = a 1-acyl-sn-glycero-2,3-cyclic phosphate + ethanolamine. In terms of biological role, dermonecrotic toxins cleave the phosphodiester linkage between the phosphate and headgroup of certain phospholipids (sphingolipid and lysolipid substrates), forming an alcohol (often choline) and a cyclic phosphate. This toxin acts on sphingomyelin (SM). It may also act on ceramide phosphoethanolamine (CPE), lysophosphatidylcholine (LPC) and lysophosphatidylethanolamine (LPE), but not on lysophosphatidylserine (LPS), and lysophosphatidylglycerol (LPG). It acts by transphosphatidylation, releasing exclusively cyclic phosphate products as second products. Induces dermonecrosis, hemolysis, increased vascular permeability, edema, inflammatory response, and platelet aggregation. This Loxosceles spadicea (Recluse spider) protein is Dermonecrotic toxin LspaSicTox-alphaIA2iv.